Here is a 396-residue protein sequence, read N- to C-terminus: Elongation factor Tu 2 (396 aa).

The region spanning 10 to 206 (KPHVNVGTIG…ALDSYIPLPE (197 aa)) is the tr-type G domain. The G1 stretch occupies residues 19-26 (GHVDHGKT). 19 to 26 (GHVDHGKT) lines the GTP pocket. Mg(2+) is bound at residue threonine 26. The G2 stretch occupies residues 60–64 (GITIN). The segment at 81–84 (DCPG) is G3. Residues 81-85 (DCPGH) and 136-139 (NKCD) contribute to the GTP site. The tract at residues 136-139 (NKCD) is G4. Residues 174–176 (SAK) form a G5 region.

It belongs to the TRAFAC class translation factor GTPase superfamily. Classic translation factor GTPase family. EF-Tu/EF-1A subfamily. As to quaternary structure, monomer.

The protein resides in the cytoplasm. It carries out the reaction GTP + H2O = GDP + phosphate + H(+). In terms of biological role, GTP hydrolase that promotes the GTP-dependent binding of aminoacyl-tRNA to the A-site of ribosomes during protein biosynthesis. This chain is Elongation factor Tu 2, found in Albidiferax ferrireducens (strain ATCC BAA-621 / DSM 15236 / T118) (Rhodoferax ferrireducens).